Reading from the N-terminus, the 1053-residue chain is MERSEPLAVLSCEEASCSSWGACGASKNLPTMTTESLEIDDGLYSRQRYVLGDTAMQKMAKSCVFLSGMGGLGVEIAKNLVLAGIKALTIHDTKKCQAWDLGTNFFLCEDDVVNERNRAEAVLHRIAELNPYVQVSSSSAPLDETTDLSFLEKYQCVVLTEIKLTLQKKINNFCHSHCPPIKFISADVHGIWSRLFCDFGDEFEVSDTTGEEPKEIFISNITQANPGIVTCLESHPHKLETGQFLTFREIHGMTGLNGSVQQITVISPFSFSIGDTTKLDPYLHGGIAVQVKTPKTFCFEPLESQIKHPRCLIADFSKPEAPLEIHLAMLALDQFQENYNRKPNIRCQQDSDELLKLTVSINETLEEKPEVNADIVHWLSWTAQGFLPPLAAAVGGVASQEVLKAVTGKFSPLCQWLYLEAADTVESLGNPGHEEFLPRGDRYDAIRACIGNTLCQKLQNLNIFLVGCGAIGCEMLKNFALLGVGTGREKGMVTVTDPDLIEKSNLNRQFLFRPHHIQKPKSYTAAEATLKINPQLKIDAHLNKVCPATESIYSDEFYTKQDIIITALDNVEARRYVDSRCLANLRPLLDSGTMGTKGHTEIIVPQLTESYNSHRDPPEEEIPFCTLKSFPAAIEHTIQWARDKFESSFSHKPSLFNKFWQAYPSAEDVLQKIQNGQSLEGCFQVIKLLSRRPRIWSQCVELARLKFEKYFNHKALQLLHCFPLETRLKDGSLFWQSPKRPPSPIKFDLNEPLHLSFLQSAAKLYATVYCIPFSEKDLSVNSLMDILSEVKIEEFKPSNKVVQTDETARKPDHVPVSSEDERNAVFQLEEALSSNKATKSDLQMTVLSFEKDDDRNGHIDFITAASNLRAKMYSIEPADRFKTKRIAGKIIPAIATSTAAVSGLVALEMIKVAGGYPFDAYKNCFLNLAIPIIVFTETSEVRKTEIRNGISFTIWDRWTVHGKEDFTLSDFINAVKENYGIEPTMVVQGVKMLYVPVMPGHAKRLKLTMHKLVKPSTEKKYVDLTVSFAPDADGDEDLPGPPVRYYFSHDTNE.

At M1 the chain carries N-acetylmethionine. Residue R46 coordinates ATP. T54 carries the post-translational modification Phosphothreonine. Positions 470 and 497 each coordinate ATP. Mg(2+) is bound by residues D499 and E502. ATP contacts are provided by N505, R508, Q509, and K521. At K544 the chain carries N6-acetyllysine. V545 contributes to the ATP binding site. D569 is a binding site for Mg(2+). N570 contacts ATP. C625 serves as the catalytic Glycyl thioester intermediate. K729 carries the N6-acetyllysine modification. At S737 the chain carries Phosphoserine.

Belongs to the ubiquitin-activating E1 family. As to quaternary structure, forms a thioester with UBD in cells stimulated with tumor necrosis factor-alpha (TNFa) and interferon-gamma (IFNg).

The catalysed reaction is ATP + ubiquitin + [E1 ubiquitin-activating enzyme]-L-cysteine = AMP + diphosphate + S-ubiquitinyl-[E1 ubiquitin-activating enzyme]-L-cysteine.. The protein operates within protein modification; protein ubiquitination. In terms of biological role, activates ubiquitin by first adenylating its C-terminal glycine residue with ATP, and thereafter linking this residue to the side chain of a cysteine residue in E1, yielding a ubiquitin-E1 thioester and free AMP. Specific for ubiquitin, does not activate ubiquitin-like peptides. Also activates UBD/FAT10 conjugation via adenylation of its C-terminal glycine. Differs from UBE1 in its specificity for substrate E2 charging. Does not charge cell cycle E2s, such as CDC34. Essential for embryonic development. This Mus musculus (Mouse) protein is Ubiquitin-like modifier-activating enzyme 6 (Uba6).